Reading from the N-terminus, the 269-residue chain is Gem-associated protein 2 (269 aa).

Phosphoserine occurs at positions 70 and 155.

The protein belongs to the gemin-2 family. As to quaternary structure, monomer. Part of the core SMN complex that contains SMN1, GEMIN2/SIP1, DDX20/GEMIN3, GEMIN4, GEMIN5, GEMIN6, GEMIN7, GEMIN8 and STRAP/UNRIP. Part of the SMN-Sm complex that contains SMN1, GEMIN2/SIP1, DDX20/GEMIN3, GEMIN4, GEMIN5, GEMIN6, GEMIN7, GEMIN8, STRAP/UNRIP and the Sm proteins SNRPB, SNRPD1, SNRPD2, SNRPD3, SNRPE, SNRPF and SNRPG. Interacts with GEMIN5; the interaction is direct. Interacts (via C-terminus) with SMN1; the interaction is direct. Interacts with SNRPD1; the interaction is direct. Interacts with SNRPD2; the interaction is direct. Interacts (via N-terminus) with SNRPF; the interaction is direct. Interacts (via N-terminus) with SNRPE; the interaction is direct. Interacts (via N-terminus) with SNRPG; the interaction is direct.

It localises to the nucleus. Its subcellular location is the gem. The protein localises to the cytoplasm. The SMN complex catalyzes the assembly of small nuclear ribonucleoproteins (snRNPs), the building blocks of the spliceosome, and thereby plays an important role in the splicing of cellular pre-mRNAs. Most spliceosomal snRNPs contain a common set of Sm proteins SNRPB, SNRPD1, SNRPD2, SNRPD3, SNRPE, SNRPF and SNRPG that assemble in a heptameric protein ring on the Sm site of the small nuclear RNA to form the core snRNP (Sm core). In the cytosol, the Sm proteins SNRPD1, SNRPD2, SNRPE, SNRPF and SNRPG (5Sm) are trapped in an inactive 6S pICln-Sm complex by the chaperone CLNS1A that controls the assembly of the core snRNP. To assemble core snRNPs, the SMN complex accepts the trapped 5Sm proteins from CLNS1A. Binding of snRNA inside 5Sm ultimately triggers eviction of the SMN complex, thereby allowing binding of SNRPD3 and SNRPB to complete assembly of the core snRNP. Within the SMN complex, GEMIN2 constrains the conformation of 5Sm, thereby promoting 5Sm binding to snRNA containing the snRNP code (a nonameric Sm site and a 3'-adjacent stem-loop), thus preventing progression of assembly until a cognate substrate is bound. This Mus musculus (Mouse) protein is Gem-associated protein 2.